We begin with the raw amino-acid sequence, 244 residues long: Venom nerve growth factor 2 (244 aa).

The signal sequence occupies residues 1–18 (MSMLCYTLIIAFLIGIWA). The propeptide occupies 19 to 125 (APKSEDNVPL…TLNRNIRAKR (107 aa)). Over residues 47–66 (GLKTSRNTDQRHPAPKKAED) the composition is skewed to basic and acidic residues. Residues 47–69 (GLKTSRNTDQRHPAPKKAEDQEL) are disordered. Disulfide bonds link C139–C205 and C181–C233.

This sequence belongs to the NGF-beta family. In terms of assembly, homodimer; non-covalently linked. Expressed by the venom gland.

It is found in the secreted. Its function is as follows. Nerve growth factor is important for the development and maintenance of the sympathetic and sensory nervous systems. It stimulates division and differentiation of sympathetic and embryonic sensory neurons as well as basal forebrain cholinergic neurons in the brain. Its relevance in the snake venom is not clear. However, it has been shown to inhibit metalloproteinase-dependent proteolysis of platelet glycoprotein Ib alpha, suggesting a metalloproteinase inhibition to prevent metalloprotease autodigestion and/or protection against prey proteases. Binds a lipid between the two protein chains in the homodimer. The lipid-bound form promotes histamine relase from mouse mast cells, contrary to the lipid-free form. This Notechis scutatus scutatus (Mainland tiger snake) protein is Venom nerve growth factor 2.